The primary structure comprises 463 residues: RuvB-like helicase 2 (463 aa).

76–83 (GPPSTGKT) serves as a coordination point for ATP.

It belongs to the RuvB family. May form heterododecamers with RVB1. Component of the SWR1 chromatin remodeling complex, the INO80 chromatin remodeling complex, and of the R2TP complex.

The protein localises to the nucleus. The catalysed reaction is ATP + H2O = ADP + phosphate + H(+). Functionally, DNA helicase which participates in several chromatin remodeling complexes, including the SWR1 and the INO80 complexes. The SWR1 complex mediates the ATP-dependent exchange of histone H2A for the H2A variant HZT1 leading to transcriptional regulation of selected genes by chromatin remodeling. The INO80 complex remodels chromatin by shifting nucleosomes and is involved in DNA repair. Also involved in pre-rRNA processing. This Cryptococcus neoformans var. neoformans serotype D (strain JEC21 / ATCC MYA-565) (Filobasidiella neoformans) protein is RuvB-like helicase 2 (RVB2).